Reading from the N-terminus, the 235-residue chain is DUP240 protein DFP4 (235 aa).

Topologically, residues 1-44 (MSSELLISNSKPRPEGLRKLCEGETVILPRDITPSKCAYFLKQN) are cytoplasmic. The chain crosses the membrane as a helical span at residues 45–65 (IVFISYIFIHIIITIILNRLA). The Extracellular segment spans residues 66 to 72 (LSAHGNT). Residues 73–93 (LIIILAALLITISLFLLLLLP) form a helical membrane-spanning segment. Residues 94 to 235 (YLSCSRYKLR…DKYPEMGVTV (142 aa)) lie on the Cytoplasmic side of the membrane.

It belongs to the DUP/COS family. As to quaternary structure, interacts according to large scale protein interaction studies with BZZ1, SRB4 and SUA7.

The protein resides in the cell membrane. This chain is DUP240 protein DFP4, found in Saccharomyces cerevisiae (strain ATCC 204508 / S288c) (Baker's yeast).